Consider the following 348-residue polypeptide: Autophagy-related protein 27 (348 aa).

An N-terminal signal peptide occupies residues 1-20 (MYRPDLLAFLLPLLAAPVFS). Over 21 to 274 (AETLDCGKIR…DDGGDNSSSH (254 aa)) the chain is Lumenal. In terms of domain architecture, MRH spans 24–255 (LDCGKIRADG…TWHTKYACEK (232 aa)). 3 cysteine pairs are disulfide-bonded: C26/C69, C82/C89, and C175/C253. N-linked (GlcNAc...) asparagine glycosylation is found at N61 and N84. Basic and acidic residues predominate over residues 180–208 (EGTEGEWVSEEKYEKRADEKKDDDKKEDG). The segment at 180 to 219 (EGTEGEWVSEEKYEKRADEKKDDDKKEDGGDKDEGESTLE) is disordered. Residues N226 and N270 are each glycosylated (N-linked (GlcNAc...) asparagine). The helical transmembrane segment at 275–295 (WGFFTWFVLIAFLLIAGYLIF) threads the bilayer. Over 296–348 (SSWINFTRYGARGWDLLPHSDTIRDIPYLLKDFIRRILNTVQGTGSRGGYSAV) the chain is Cytoplasmic.

Belongs to the ATG27 family. In terms of assembly, forms a complex with ATG9 and ATG23.

It is found in the cytoplasmic vesicle membrane. The protein localises to the golgi apparatus membrane. The protein resides in the mitochondrion membrane. Its subcellular location is the preautophagosomal structure membrane. Its function is as follows. Effector of VPS34 phosphatidylinositol 3-phosphate kinase signaling. Regulates the cytoplasm to vacuole transport (Cvt) vesicle formation. Plays a role in ATG protein retrieval from the pre-autophagosomal structure (PAS) and is especially required for autophagy-dependent cycling of ATG9. Autophagy is required for proper vegetative growth, asexual/sexual reproduction, and full virulence. Autophagy is particularly involved in the biosynthesis of deoxynivalenol (DON), an important virulence determinant. This is Autophagy-related protein 27 from Gibberella zeae (strain ATCC MYA-4620 / CBS 123657 / FGSC 9075 / NRRL 31084 / PH-1) (Wheat head blight fungus).